The primary structure comprises 1550 residues: Protein TIME FOR COFFEE (1550 aa).

10 disordered regions span residues 1 to 191 (MDRN…PVSP), 207 to 304 (VPRK…PVAV), 325 to 505 (TSKQ…SERG), 708 to 736 (QGSV…TAQR), 779 to 805 (RPPN…SATP), 859 to 1023 (FNGS…KAGV), 1086 to 1130 (ASLE…QSIA), 1163 to 1196 (ALPQ…SQQP), 1213 to 1296 (AASA…SVAA), and 1321 to 1435 (NSKP…PKHG). A compositionally biased stretch (basic and acidic residues) spans 43–80 (EAARLRDRGGSNKKDRDRERDRDRERERERDRERDRLN). Positions 100–118 (DGGDDSSEESVNDDEEYDD) are enriched in acidic residues. Positions 134–151 (SNNISAASFSSSLSNHHN) are enriched in low complexity. A compositionally biased stretch (basic residues) spans 157 to 171 (LHHHHHSHNNNHQRK). Positions 241 to 250 (RQISSTSPAN) are enriched in polar residues. The segment covering 292-301 (KSSSSKLSSP) has biased composition (low complexity). The segment covering 348 to 366 (RVSSPISNPQTLPQSSITL) has biased composition (polar residues). Positions 367–379 (AANSSSSNVSAIA) are enriched in low complexity. Polar residues predominate over residues 409–432 (SKSQVPFSNQLKSSGSGEGNSSVL). Composition is skewed to basic and acidic residues over residues 447–461 (DSEK…DETI) and 473–490 (SDGE…KFEI). 3 stretches are compositionally biased toward polar residues: residues 713–736 (GRSS…TAQR), 783–803 (SGIT…SASA), and 884–992 (LTGQ…NLGL). The segment covering 1112-1126 (SGGGAIGKTSGGNGG) has biased composition (gly residues). Over residues 1164 to 1173 (LPQSSGSLPT) the composition is skewed to polar residues. Over residues 1174–1195 (SHHQQLLQQQQQQHMQRSQSQQ) the composition is skewed to low complexity. Residues 1234-1253 (NMTTSPAGTTKFANANSGFP) are compositionally biased toward polar residues. Low complexity predominate over residues 1254-1273 (QNLVQSSSNQVQSQQWKNNS). Polar residues-rich tracts occupy residues 1274–1296 (PRTT…SVAA), 1321–1342 (NSKP…NHQA), and 1351–1360 (SPSTSSVSKN). Over residues 1361–1382 (ASGSPRTTASASSAANKGGQAS) the composition is skewed to low complexity. 2 stretches are compositionally biased toward polar residues: residues 1383 to 1397 (TTTH…NLQP) and 1405 to 1419 (GGRN…NPTT). Residues 1420–1435 (SSGSKSQQQQQLPKHG) show a composition bias toward low complexity.

Interacts with MYC2.

It is found in the nucleus. Functionally, regulator of normal clock function. Acts in the mid to late night. Contributes to the amplitude of circadian clocks. May act on the transcriptional induction of LATE ELONGATED HYPOCOTYL (LHY). Inhibits MYC2 protein accumulation, acting as a negative factor in the JA-signaling pathway. The chain is Protein TIME FOR COFFEE (TIC) from Arabidopsis thaliana (Mouse-ear cress).